The sequence spans 160 residues: Cytochrome b6-f complex subunit 4 (160 aa).

The next 3 helical transmembrane spans lie at 36 to 56 (LLYI…GLAV), 95 to 115 (LLGV…PFLE), and 131 to 151 (TVFL…ALPI).

This sequence belongs to the cytochrome b family. PetD subfamily. As to quaternary structure, the 4 large subunits of the cytochrome b6-f complex are cytochrome b6, subunit IV (17 kDa polypeptide, petD), cytochrome f and the Rieske protein, while the 4 small subunits are petG, petL, petM and petN. The complex functions as a dimer.

The protein localises to the plastid. Its subcellular location is the chloroplast thylakoid membrane. Its function is as follows. Component of the cytochrome b6-f complex, which mediates electron transfer between photosystem II (PSII) and photosystem I (PSI), cyclic electron flow around PSI, and state transitions. This chain is Cytochrome b6-f complex subunit 4, found in Psilotum nudum (Whisk fern).